We begin with the raw amino-acid sequence, 421 residues long: Mitochondrial tRNA-specific 2-thiouridylase 1 (421 aa).

ATP is bound by residues 10–17 (ALSGGVDS) and M36. Residues 96-98 (NPD) form an interaction with target base in tRNA region. The active-site Nucleophile is the C101. C101 and C222 are joined by a disulfide. G126 lines the ATP pocket. An interaction with tRNA region spans residues 171–173 (KDQ). Catalysis depends on C222, which acts as the Cysteine persulfide intermediate. The interval 334–335 (RH) is interaction with tRNA. Residues 395–421 (KGQRRAGMATESPSDSPEDGPGLSPLL) are disordered.

Belongs to the MnmA/TRMU family. As to expression, ubiquitous. Abundantly expressed in tissues with high metabolic rates including heart, liver, kidney, and brain.

Its subcellular location is the mitochondrion. The enzyme catalyses 5-taurinomethyluridine(34) in tRNA + S-sulfanyl-L-cysteinyl-[protein] + AH2 + ATP = 5-taurinomethyl-2-thiouridine(34) in tRNA + L-cysteinyl-[protein] + A + AMP + diphosphate + H(+). Functionally, catalyzes the 2-thiolation of uridine at the wobble position (U34) of mitochondrial tRNA(Lys), tRNA(Glu) and tRNA(Gln). Required for the formation of 5-taurinomethyl-2-thiouridine (tm5s2U) of mitochondrial tRNA(Lys), tRNA(Glu), and tRNA(Gln) at the wobble position. ATP is required to activate the C2 atom of the wobble base. This is Mitochondrial tRNA-specific 2-thiouridylase 1 (TRMU) from Homo sapiens (Human).